A 175-amino-acid polypeptide reads, in one-letter code: Colicin-B immunity protein (175 aa).

The next 3 membrane-spanning stretches (helical) occupy residues 14-32 (ILYAFSIIGIIPLMAILIL), 104-121 (CFWGPVFYAILIYITLFY), and 149-168 (IYFTVLTMTYAILLMPLLVI).

The protein localises to the cell inner membrane. This protein is able to protect a cell, which harbors the plasmid ColB encoding colicin B, against colicin B. The polypeptide is Colicin-B immunity protein (cbi) (Escherichia coli).